The sequence spans 118 residues: Phosphoribosyl-AMP cyclohydrolase (118 aa).

Asp87 serves as a coordination point for Mg(2+). Cys88 contacts Zn(2+). Mg(2+)-binding residues include Asp89 and Asp91. Zn(2+) contacts are provided by Cys104 and Cys111.

This sequence belongs to the PRA-CH family. In terms of assembly, homodimer. It depends on Mg(2+) as a cofactor. Zn(2+) serves as cofactor.

The protein resides in the cytoplasm. The enzyme catalyses 1-(5-phospho-beta-D-ribosyl)-5'-AMP + H2O = 1-(5-phospho-beta-D-ribosyl)-5-[(5-phospho-beta-D-ribosylamino)methylideneamino]imidazole-4-carboxamide. Its pathway is amino-acid biosynthesis; L-histidine biosynthesis; L-histidine from 5-phospho-alpha-D-ribose 1-diphosphate: step 3/9. Functionally, catalyzes the hydrolysis of the adenine ring of phosphoribosyl-AMP. This Corynebacterium glutamicum (strain ATCC 13032 / DSM 20300 / JCM 1318 / BCRC 11384 / CCUG 27702 / LMG 3730 / NBRC 12168 / NCIMB 10025 / NRRL B-2784 / 534) protein is Phosphoribosyl-AMP cyclohydrolase.